Here is a 95-residue protein sequence, read N- to C-terminus: Protein ECS1 (95 aa).

An N-terminal signal peptide occupies residues 1–27 (MASSIVSSMFLFLLLLLVFPHIDNVLG).

Expressed in leaves, flowers and stems, but not in roots.

It localises to the secreted. The protein localises to the cell wall. Maybe involved in defense responses to X.campestris, but probably not a X.campestris pv. campestris race 750 (e.g. Xcc750) resistance gene; according to genetic data, linked to a locus influencing resistance to Xcc750. This chain is Protein ECS1, found in Arabidopsis thaliana (Mouse-ear cress).